The chain runs to 190 residues: Heme-binding protein 1 (190 aa).

This sequence belongs to the HEBP family. As to quaternary structure, monomer. Ubiquitously expressed. Extremely abundant in liver.

The protein resides in the cytoplasm. Its function is as follows. May bind free porphyrinogens that may be present in the cell and thus facilitate removal of these potentially toxic compound. Binds with a high affinity to one molecule of heme or porphyrins. It binds metalloporphyrins, free porphyrins and N-methylprotoporphyrin with similar affinities. This chain is Heme-binding protein 1 (Hebp1), found in Mus musculus (Mouse).